A 1025-amino-acid chain; its full sequence is Multidrug resistance protein MdtC (1025 aa).

The next 12 membrane-spanning stretches (helical) occupy residues 3–23, 333–353, 360–380, 387–407, 431–451, 463–483, 528–548, 853–873, 875–895, 897–917, 953–973, and 984–1004; these read FFALFIYRPVATILLSVAITL, EVEQTLIISVALVILVVFLFL, IIPAVSVPVSLIGTFAAMYLC, LSLMALTIATGFVVDDAIVVL, VGFTVLSMSLSLVAVFLPLLL, FAVTLSVAIGISLLVSLTLTP, LVGVVLLGTIALNIWLYISIP, VILIIAAIATVYIVLGILYES, VHPLTILSTLPSAGVGALLAL, LFNAPFSLIALIGIMLLIGIV, PIMMTTLAALFGALPLVLSGG, and ITIVGGLVMSQLLTLYTTPVV.

Belongs to the resistance-nodulation-cell division (RND) (TC 2.A.6) family. MdtC subfamily. In terms of assembly, part of a tripartite efflux system composed of MdtA, MdtB and MdtC. MdtC forms a heteromultimer with MdtB.

The protein localises to the cell inner membrane. The polypeptide is Multidrug resistance protein MdtC (Shigella sonnei (strain Ss046)).